We begin with the raw amino-acid sequence, 82 residues long: Small ribosomal subunit protein bS20 (82 aa).

Positions 1–11 (MANHKSALKRI) are enriched in basic residues. The segment at 1 to 20 (MANHKSALKRIRSNETKRLR) is disordered.

It belongs to the bacterial ribosomal protein bS20 family.

Functionally, binds directly to 16S ribosomal RNA. The protein is Small ribosomal subunit protein bS20 of Christiangramia forsetii (strain DSM 17595 / CGMCC 1.15422 / KT0803) (Gramella forsetii).